Here is a 180-residue protein sequence, read N- to C-terminus: MAVIKVKKTGQVIEGEDNVRAFLNSQGVLYEHWDITKLPEHLRDKYVLTDEEKEEILATFKDEIEDLAARRGYKTWDIVALSDATPNLEELLKKFEQVHIHTEDEVRAITAGHGIFIIKGDKETGYFDVELEAGDVISVPEGNPHYFTLMDDRQVVAVRLFIDPSGWVAHPYEEKEEVNS.

Fe(2+)-binding residues include His-99, His-101, Glu-105, and His-145. Positions 99, 101, 105, and 145 each coordinate Ni(2+).

It belongs to the acireductone dioxygenase (ARD) family. Monomer. It depends on Fe(2+) as a cofactor. Ni(2+) is required as a cofactor.

It catalyses the reaction 1,2-dihydroxy-5-(methylsulfanyl)pent-1-en-3-one + O2 = 3-(methylsulfanyl)propanoate + CO + formate + 2 H(+). The enzyme catalyses 1,2-dihydroxy-5-(methylsulfanyl)pent-1-en-3-one + O2 = 4-methylsulfanyl-2-oxobutanoate + formate + 2 H(+). It participates in amino-acid biosynthesis; L-methionine biosynthesis via salvage pathway; L-methionine from S-methyl-5-thio-alpha-D-ribose 1-phosphate: step 5/6. Its function is as follows. Catalyzes 2 different reactions between oxygen and the acireductone 1,2-dihydroxy-3-keto-5-methylthiopentene (DHK-MTPene) depending upon the metal bound in the active site. Fe-containing acireductone dioxygenase (Fe-ARD) produces formate and 2-keto-4-methylthiobutyrate (KMTB), the alpha-ketoacid precursor of methionine in the methionine recycle pathway. Ni-containing acireductone dioxygenase (Ni-ARD) produces methylthiopropionate, carbon monoxide and formate, and does not lie on the methionine recycle pathway. The protein is Acireductone dioxygenase of Geobacillus thermodenitrificans (strain NG80-2).